A 147-amino-acid polypeptide reads, in one-letter code: Cytochrome c-type biogenesis protein CcmE (147 aa).

Residues 1 to 9 (MKSLKKQRR) are Cytoplasmic-facing. The helical; Signal-anchor for type II membrane protein transmembrane segment at 10-30 (IQIIALATVALVGSTALIGYA) threads the bilayer. Over 31–147 (MRDGINYFRS…EQGVYREGDS (117 aa)) the chain is Periplasmic. Residues H123 and Y127 each contribute to the heme site.

This sequence belongs to the CcmE/CycJ family.

The protein localises to the cell inner membrane. In terms of biological role, heme chaperone required for the biogenesis of c-type cytochromes. Transiently binds heme delivered by CcmC and transfers the heme to apo-cytochromes in a process facilitated by CcmF and CcmH. This Ruegeria sp. (strain TM1040) (Silicibacter sp.) protein is Cytochrome c-type biogenesis protein CcmE.